A 557-amino-acid chain; its full sequence is Kelch repeat and BTB domain-containing protein 2 (557 aa).

The 70-residue stretch at 26-95 (CDVIITIRDG…LYNRHISSMN (70 aa)) folds into the BTB domain. The BACK domain maps to 143–223 (IVKYIKRMLM…CIDIQNLDKK (81 aa)). Kelch repeat units follow at residues 305–352 (EIII…VIDD), 353–399 (TIYA…VLDQ), and 415–464 (SVHA…SHED).

Interacts (via BTB domain) with host CUL3.

The protein localises to the host cytoplasm. In terms of biological role, probable substrate-specific adapter of CUL3-containing E3 ubiquitin-protein ligases which mediate the ubiquitination and subsequent proteasomal degradation of host target proteins. In Cowpox virus (strain Brighton Red) (CPV), this protein is Kelch repeat and BTB domain-containing protein 2 (KBTB2).